A 357-amino-acid chain; its full sequence is Geranylgeranyl pyrophosphate synthase, chloroplastic (357 aa).

Residues Met1 to Thr40 constitute a chloroplast transit peptide. Positions 106, 109, and 138 each coordinate isopentenyl diphosphate. The Mg(2+) site is built by Asp145 and Asp151. Dimethylallyl diphosphate is bound at residue Arg156. An isopentenyl diphosphate-binding site is contributed by Arg157. Positions 242, 243, 280, 297, and 307 each coordinate dimethylallyl diphosphate.

It belongs to the FPP/GGPP synthase family. Mg(2+) is required as a cofactor.

It is found in the plastid. The protein localises to the chloroplast. It catalyses the reaction isopentenyl diphosphate + dimethylallyl diphosphate = (2E)-geranyl diphosphate + diphosphate. The enzyme catalyses isopentenyl diphosphate + (2E)-geranyl diphosphate = (2E,6E)-farnesyl diphosphate + diphosphate. It carries out the reaction isopentenyl diphosphate + (2E,6E)-farnesyl diphosphate = (2E,6E,10E)-geranylgeranyl diphosphate + diphosphate. It functions in the pathway isoprenoid biosynthesis; farnesyl diphosphate biosynthesis; farnesyl diphosphate from geranyl diphosphate and isopentenyl diphosphate: step 1/1. It participates in isoprenoid biosynthesis; geranyl diphosphate biosynthesis; geranyl diphosphate from dimethylallyl diphosphate and isopentenyl diphosphate: step 1/1. Its pathway is isoprenoid biosynthesis; geranylgeranyl diphosphate biosynthesis; geranylgeranyl diphosphate from farnesyl diphosphate and isopentenyl diphosphate: step 1/1. In terms of biological role, catalyzes the trans-addition of the three molecules of IPP onto DMAPP to form geranylgeranyl pyrophosphate. The chain is Geranylgeranyl pyrophosphate synthase, chloroplastic (GGPS1) from Catharanthus roseus (Madagascar periwinkle).